Here is a 181-residue protein sequence, read N- to C-terminus: Inorganic pyrophosphatase (181 aa).

Substrate is bound by residues Lys-16, Arg-30, and Tyr-42. Residues Asp-52, Asp-57, and Asp-89 each coordinate Mg(2+). Residue Tyr-126 coordinates substrate.

It belongs to the PPase family. In terms of assembly, homohexamer. It depends on Mg(2+) as a cofactor.

Its subcellular location is the cytoplasm. It catalyses the reaction diphosphate + H2O = 2 phosphate + H(+). Its function is as follows. Catalyzes the hydrolysis of inorganic pyrophosphate (PPi) forming two phosphate ions. The sequence is that of Inorganic pyrophosphatase from Ureaplasma parvum serovar 3 (strain ATCC 700970).